The primary structure comprises 163 residues: R-phycoerythrin alpha chain (163 aa).

(2R,3E)-phycoerythrobilin contacts are provided by Cys82 and Cys139.

The protein belongs to the phycobiliprotein family. Heterodimer of an alpha and a beta chain. In terms of processing, contains two covalently linked bilin chromophores.

It is found in the plastid. Its subcellular location is the chloroplast thylakoid membrane. Functionally, light-harvesting photosynthetic bile pigment-protein from the phycobiliprotein complex. This Aglaothamnion neglectum (Red alga) protein is R-phycoerythrin alpha chain (cpeA).